A 456-amino-acid chain; its full sequence is tRNA modification GTPase MnmE (456 aa).

(6S)-5-formyl-5,6,7,8-tetrahydrofolate contacts are provided by Arg24, Glu81, and Lys120. Residues Gly216 to Gly379 form the TrmE-type G domain. Asn226 contributes to the K(+) binding site. Residues Asn226 to Ser231, Thr245 to Thr251, Asp270 to Gly273, and Asn335 to Asp338 each bind GTP. Ser230 provides a ligand contact to Mg(2+). Thr245, Ile247, and Thr250 together coordinate K(+). Thr251 is a binding site for Mg(2+). Lys456 is a binding site for (6S)-5-formyl-5,6,7,8-tetrahydrofolate.

Belongs to the TRAFAC class TrmE-Era-EngA-EngB-Septin-like GTPase superfamily. TrmE GTPase family. Homodimer. Heterotetramer of two MnmE and two MnmG subunits. The cofactor is K(+).

The protein localises to the cytoplasm. Functionally, exhibits a very high intrinsic GTPase hydrolysis rate. Involved in the addition of a carboxymethylaminomethyl (cmnm) group at the wobble position (U34) of certain tRNAs, forming tRNA-cmnm(5)s(2)U34. In Pseudomonas putida (strain ATCC 47054 / DSM 6125 / CFBP 8728 / NCIMB 11950 / KT2440), this protein is tRNA modification GTPase MnmE.